We begin with the raw amino-acid sequence, 261 residues long: High-affinity zinc uptake system membrane protein ZnuB (261 aa).

Residues 1-7 (MIELLFP) lie on the Periplasmic side of the membrane. A helical membrane pass occupies residues 8–28 (GWLAGIMLACAAGPLGSFVVW). Topologically, residues 29–53 (RRMSYFGDTLAHASLLGVAFGLLLD) are cytoplasmic. The helical transmembrane segment at 54-74 (VNPFYAVIAVTLLLAGGLVWL) threads the bilayer. Residues 75–83 (EKRPQLAID) lie on the Periplasmic side of the membrane. The chain crosses the membrane as a helical span at residues 84-104 (TLLGIMAHSALSLGLVVVSLM). The Cytoplasmic portion of the chain corresponds to 105–121 (SNIRVDLMAYLFGDLLA). Residues 122–142 (VTPEDLISIAIGVVIVVAILF) traverse the membrane as a helical segment. Over 143 to 177 (WQWRNLLSMTISPDLAFVDGVKLQRVKLLLMLVTA) the chain is Periplasmic. A helical transmembrane segment spans residues 178–198 (LTIGVAMKFVGALIITSLLII). Topologically, residues 199-213 (PAATARRFARTPEQM) are cytoplasmic. The chain crosses the membrane as a helical span at residues 214 to 234 (AGVAVLVGMVAVTGGLTFSAV). Position 235 (Tyr-235) is a topological domain, periplasmic. Residues 236–256 (DTPAGPSVVLCAALLFILSMM) form a helical membrane-spanning segment. Residues 257–261 (KKQAS) lie on the Cytoplasmic side of the membrane.

It belongs to the ABC-3 integral membrane protein family.

It localises to the cell inner membrane. Involved in the high-affinity zinc uptake transport system. This Escherichia coli (strain K12) protein is High-affinity zinc uptake system membrane protein ZnuB (znuB).